A 145-amino-acid polypeptide reads, in one-letter code: Large ribosomal subunit protein uL11 (145 aa).

This sequence belongs to the universal ribosomal protein uL11 family. As to quaternary structure, part of the ribosomal stalk of the 50S ribosomal subunit. Interacts with L10 and the large rRNA to form the base of the stalk. L10 forms an elongated spine to which L12 dimers bind in a sequential fashion forming a multimeric L10(L12)X complex. Post-translationally, one or more lysine residues are methylated.

Forms part of the ribosomal stalk which helps the ribosome interact with GTP-bound translation factors. The sequence is that of Large ribosomal subunit protein uL11 from Coxiella burnetii (strain Dugway 5J108-111).